A 123-amino-acid polypeptide reads, in one-letter code: Large ribosomal subunit protein bL12 (123 aa).

It belongs to the bacterial ribosomal protein bL12 family. As to quaternary structure, homodimer. Part of the ribosomal stalk of the 50S ribosomal subunit. Forms a multimeric L10(L12)X complex, where L10 forms an elongated spine to which 2 to 4 L12 dimers bind in a sequential fashion. Binds GTP-bound translation factors.

In terms of biological role, forms part of the ribosomal stalk which helps the ribosome interact with GTP-bound translation factors. Is thus essential for accurate translation. The protein is Large ribosomal subunit protein bL12 of Acholeplasma laidlawii (strain PG-8A).